Consider the following 450-residue polypeptide: Deoxyguanosinetriphosphate triphosphohydrolase-like protein (450 aa).

The HD domain occupies 61 to 274; sequence RLTHSLEVAQ…MELADDIAYA (214 aa).

It belongs to the dGTPase family. Type 2 subfamily.

The sequence is that of Deoxyguanosinetriphosphate triphosphohydrolase-like protein from Histophilus somni (strain 2336) (Haemophilus somnus).